Reading from the N-terminus, the 87-residue chain is Small ribosomal subunit protein bS20 (87 aa).

The protein belongs to the bacterial ribosomal protein bS20 family.

In terms of biological role, binds directly to 16S ribosomal RNA. The chain is Small ribosomal subunit protein bS20 from Mycoplasma pneumoniae (strain ATCC 29342 / M129 / Subtype 1) (Mycoplasmoides pneumoniae).